The primary structure comprises 176 residues: uncharacterized protein (176 aa).

The disordered stretch occupies residues 71–176; it reads RDDMSSDSDG…YSTDDDEDDY (106 aa). Low complexity-rich tracts occupy residues 77-87 and 100-109; these read DSDGPAASPPG and SYSSSDSSAR. The segment covering 140-152 has biased composition (basic residues); the sequence is KARRPARKKKRIG.

This is an uncharacterized protein from Orgyia pseudotsugata multicapsid polyhedrosis virus (OpMNPV).